Here is a 679-residue protein sequence, read N- to C-terminus: Recombination repair protein 1 (679 aa).

Residues 1-407 (MPRVKAVKKQ…TKKAKKAETK (407 aa)) are disordered. Basic residues predominate over residues 45–55 (AKGKPRARKAT). Residues 106–116 (ATAEAEPEPKV) are compositionally biased toward basic and acidic residues. A phosphothreonine mark is found at threonine 133 and threonine 140. Serine 142 carries the post-translational modification Phosphoserine. 2 stretches are compositionally biased toward basic and acidic residues: residues 179–189 (EPPKQRARKEA) and 203–214 (SKEKVQKAETAA). Serine 258 carries the post-translational modification Phosphoserine. Positions 312–347 (KKEGKEPAPGKKQKKSADKENGVVEEEAKPSTETKP) are enriched in basic and acidic residues. Residues 428-679 (KICSWNVAGL…HCPITIFFNI (252 aa)) are AP endonuclease. Glutamate 461 contacts Mg(2+). The active site involves tyrosine 533. 3 residues coordinate Mg(2+): aspartate 572, asparagine 574, and aspartate 669. Aspartate 572 functions as the Proton donor/acceptor in the catalytic mechanism.

It belongs to the DNA repair enzymes AP/ExoA family. In terms of assembly, interacts with the zeta DNA polymerase complex; interacts (via the N-terminus) with the accessory subunit PolZ2/Rev7 and also interacts with the catalytic component PolZ1, however the interaction with PolZ1 is likely via PolZ2. Requires Mg(2+) as cofactor. The cofactor is Mn(2+).

Its subcellular location is the nucleus. It catalyses the reaction Exonucleolytic cleavage in the 3'- to 5'-direction to yield nucleoside 5'-phosphates.. In terms of biological role, plays a role in the cellular response to oxidative stress by promoting DNA repair mechanisms such as base excision repair and possibly homologous recombination repair. Functions as an apurinic/apyrimidinic (AP) endodeoxyribonuclease in the DNA base excision repair (BER) pathway of DNA lesions induced by oxidative and alkylating agents. Likely to initiate repair of AP sites in DNA by catalyzing hydrolytic incision of the phosphodiester backbone immediately adjacent to the damage, generating a single-strand break with 5'-deoxyribose phosphate and 3'-hydroxyl ends. Has a 3'-5' exoribonuclease activity on mismatched deoxyribonucleotides at the 3' termini of nicked or gapped DNA molecules during short-patch BER. Has apurinic endonuclease and double-stranded DNA 3'-exonuclease activities and carries out single-stranded DNA renaturation in a Mg(2+)-dependent manner. Activity is more efficient in purine-rich regions of dsDNA than in pyrimidine-rich regions. The protein is Recombination repair protein 1 of Drosophila melanogaster (Fruit fly).